The following is a 272-amino-acid chain: L-aspartate dehydrogenase 3 (272 aa).

Residues alanine 126 and asparagine 194 each coordinate NAD(+). Histidine 224 is a catalytic residue.

Belongs to the L-aspartate dehydrogenase family.

It catalyses the reaction L-aspartate + NADP(+) + H2O = oxaloacetate + NH4(+) + NADPH + H(+). The enzyme catalyses L-aspartate + NAD(+) + H2O = oxaloacetate + NH4(+) + NADH + H(+). It participates in cofactor biosynthesis; NAD(+) biosynthesis; iminoaspartate from L-aspartate (dehydrogenase route): step 1/1. Functionally, specifically catalyzes the NAD or NADP-dependent dehydrogenation of L-aspartate to iminoaspartate. The polypeptide is L-aspartate dehydrogenase 3 (Bordetella bronchiseptica (strain ATCC BAA-588 / NCTC 13252 / RB50) (Alcaligenes bronchisepticus)).